A 120-amino-acid polypeptide reads, in one-letter code: Large ribosomal subunit protein uL18 (120 aa).

The segment at 1–25 (MKQTRTAARQSRHQRIRRKVKGTSD) is disordered. The segment covering 10–21 (QSRHQRIRRKVK) has biased composition (basic residues).

The protein belongs to the universal ribosomal protein uL18 family. As to quaternary structure, part of the 50S ribosomal subunit; part of the 5S rRNA/L5/L18/L25 subcomplex. Contacts the 5S and 23S rRNAs.

In terms of biological role, this is one of the proteins that bind and probably mediate the attachment of the 5S RNA into the large ribosomal subunit, where it forms part of the central protuberance. The protein is Large ribosomal subunit protein uL18 of Thermosynechococcus vestitus (strain NIES-2133 / IAM M-273 / BP-1).